The sequence spans 614 residues: Leucine aminopeptidase 2 (614 aa).

Residues 139 to 141 and 271 to 276 contribute to the a peptide site; these read QCQ and PYGGME. Zn(2+) is bound at residue H300. The Proton acceptor role is filled by E301. Residues H304 and E323 each contribute to the Zn(2+) site. Y385 (proton donor) is an active-site residue.

It belongs to the peptidase M1 family. Zn(2+) is required as a cofactor.

It localises to the cytoplasm. The protein resides in the nucleus. It carries out the reaction an epoxide + H2O = an ethanediol. Functionally, aminopeptidase that preferentially cleaves di- and tripeptides. Also has low epoxide hydrolase activity (in vitro). Can hydrolyze the epoxide leukotriene LTA(4) but it forms preferentially 5,6-dihydroxy-7,9,11,14-eicosatetraenoic acid rather than the cytokine leukotriene B(4) as the product compared to the homologous mammalian enzyme (in vitro). This chain is Leucine aminopeptidase 2, found in Aspergillus fumigatus (strain ATCC MYA-4609 / CBS 101355 / FGSC A1100 / Af293) (Neosartorya fumigata).